A 61-amino-acid chain; its full sequence is Insect toxin BsIT2 (61 aa).

Residues 1–61 enclose the LCN-type CS-alpha/beta domain; that stretch reads DGYIKKSKGC…RWKYETKTCK (61 aa). 4 disulfides stabilise this stretch: C10–C60, C14–C35, C21–C42, and C25–C44.

Belongs to the long (4 C-C) scorpion toxin superfamily. Sodium channel inhibitor family. Beta subfamily. As to expression, expressed by the venom gland.

The protein localises to the secreted. Depressant insect beta-toxins cause a transient contraction paralysis followed by a slow flaccid paralysis. They bind voltage-independently at site-4 of sodium channels (Nav) and shift the voltage of activation toward more negative potentials thereby affecting sodium channel activation and promoting spontaneous and repetitive firing. This toxin is active only on insects. In Hottentotta tamulus sindicus (Scorpion), this protein is Insect toxin BsIT2.